A 172-amino-acid chain; its full sequence is Exocyst complex component 1-like (172 aa).

This is Exocyst complex component 1-like from Mus musculus (Mouse).